Reading from the N-terminus, the 648-residue chain is Pumilio homolog 3 (648 aa).

The disordered stretch occupies residues 1–124; sequence MEVKGKKQFT…KKKKELKQSR (124 aa). Residues 17 to 27 are compositionally biased toward basic and acidic residues; it reads AQEKNRFHKNS. K33 carries the N6-acetyllysine modification. Over residues 60–69 the composition is skewed to basic residues; that stretch reads LGKKGVKQFK. Over residues 94–124 the composition is skewed to basic and acidic residues; sequence FQPDGRSDESAAKKPKWDDFKKKKKELKQSR. Residues 106 to 118 carry the Nuclear localization signal motif; that stretch reads KKPKWDDFKKKKK. Positions 143 to 510 constitute a PUM-HD domain; sequence EILRRKDCDK…VVLDKSACVL (368 aa). Pumilio repeat units lie at residues 177–212, 213–248, 249–277, 289–325, 326–361, 362–397, 398–435, 436–504, 505–551, 552–596, and 597–636; these read HDSTRVIQCYIQYGNEEQRKQAFEELRDDLVELSKA, KYSRNIVKKFLMYGSKPQIAEIIRSFKGHVRKMLRH, AEASAIVEYAYNDKAILEQRNMLTEELYG, RTLDKVLEVQPEKLELIMDEMKQILTPMAQKEAVIKH, SLVHKVFLDFFTYAPPKLRSEMIEAIREAVVYLAHT, HDGARVAMHCLWHGTPKDRKVIVKTMKTYVEKVANG, QYSHLVLLAAFDCIDDTKLVKQIIISEIISSLPSIVND, KYGR…VVLD, KSAC…IAEH, PAGH…WASV, and NRGAIILSSLLQSCDLEVANKVKAALKSLIPTLEKTKSTS. The interval 289 to 297 is HA-8; that stretch reads RTLDKVLEV.

Interacts with PARP1 (via catalytic domain). As to expression, widely expressed.

It localises to the nucleus. It is found in the nucleolus. The protein localises to the nucleoplasm. Its subcellular location is the chromosome. Its function is as follows. Inhibits the poly(ADP-ribosyl)ation activity of PARP1 and the degradation of PARP1 by CASP3 following genotoxic stress. Binds to double-stranded RNA or DNA without sequence specificity. Involved in development of the eye and of primordial germ cells. This is Pumilio homolog 3 from Homo sapiens (Human).